A 294-amino-acid polypeptide reads, in one-letter code: Casein kinase II subunit beta (294 aa).

Disordered stretches follow at residues 66 to 90 (DHNTDNTTTNTSNNNDSRNGTSKRN) and 269 to 294 (KRMEEDDEEEEDEVEEEDDDRTMASE). A compositionally biased stretch (low complexity) spans 70–87 (DNTTTNTSNNNDSRNGTS). The span at 273-288 (EDDEEEEDEVEEEDDD) shows a compositional bias: acidic residues.

It belongs to the casein kinase 2 subunit beta family. As to quaternary structure, tetramer composed of two alpha chains, one beta chain and one beta' chain. Phosphorylated by alpha subunit.

In terms of biological role, regulatory subunit of casein kinase II/CK2. As part of the kinase complex regulates the basal catalytic activity of the alpha subunit a constitutively active serine/threonine-protein kinase that phosphorylates a large number of substrates containing acidic residues C-terminal to the phosphorylated serine or threonine. The protein is Casein kinase II subunit beta (CKB1) of Candida albicans (Yeast).